A 191-amino-acid chain; its full sequence is Peptidyl-tRNA hydrolase (191 aa).

Residue Tyr17 participates in tRNA binding. His22 functions as the Proton acceptor in the catalytic mechanism. The tRNA site is built by Tyr68, Asn70, and Asn116.

It belongs to the PTH family. Monomer.

The protein localises to the cytoplasm. The enzyme catalyses an N-acyl-L-alpha-aminoacyl-tRNA + H2O = an N-acyl-L-amino acid + a tRNA + H(+). Its function is as follows. Hydrolyzes ribosome-free peptidyl-tRNAs (with 1 or more amino acids incorporated), which drop off the ribosome during protein synthesis, or as a result of ribosome stalling. Catalyzes the release of premature peptidyl moieties from peptidyl-tRNA molecules trapped in stalled 50S ribosomal subunits, and thus maintains levels of free tRNAs and 50S ribosomes. This Mycobacterium marinum (strain ATCC BAA-535 / M) protein is Peptidyl-tRNA hydrolase.